The sequence spans 242 residues: Outer membrane protein class 4 (242 aa).

An N-terminal signal peptide occupies residues 1-22 (MTKQLKLSALFVALLASGTAVA). 7 tandem repeats follow at residues 69-70 (AP), 71-72 (EP), 73-74 (EP), 75-76 (EP), 77-78 (EP), 79-80 (AP), and 81-82 (AP). The segment at 69–82 (APEPEPEPEPAPAP) is 7 X 2 AA tandem repeats of X-P. An OmpA-like domain is found at 92–229 (YVDETISLSA…RVDVKIRSIV (138 aa)). An intrachain disulfide couples Cys-191 to Cys-214.

It belongs to the outer membrane OOP (TC 1.B.6) superfamily.

Its subcellular location is the cell outer membrane. This is Outer membrane protein class 4 (rmpM) from Neisseria meningitidis serogroup A / serotype 4A (strain DSM 15465 / Z2491).